An 85-amino-acid chain; its full sequence is U4-theraphotoxin-Hhn1c (85 aa).

The signal sequence occupies residues 1 to 22; it reads MKVTLIAILTCAAVLVLHTTAA. The propeptide occupies 23–48; it reads EELEAESQLMEVGMPDTELAAVDEER. 3 disulfide bridges follow: Cys-52–Cys-66, Cys-56–Cys-77, and Cys-71–Cys-82.

This sequence belongs to the neurotoxin 12 (Hwtx-2) family. 02 (Hwtx-2) subfamily. Expressed by the venom gland.

It is found in the secreted. In terms of biological role, postsynaptic neurotoxin. This Cyriopagopus hainanus (Chinese bird spider) protein is U4-theraphotoxin-Hhn1c.